We begin with the raw amino-acid sequence, 140 residues long: uncharacterized protein (140 aa).

A coiled-coil region spans residues 27–65 (LLGEVSELELQKICFNRSLRNEINQLEEQNDISFVRVER).

This is an uncharacterized protein from Pasteurella multocida (strain Pm70).